The primary structure comprises 420 residues: D-tagatose-1,6-bisphosphate aldolase subunit GatZ (420 aa).

The protein belongs to the GatZ/KbaZ family. GatZ subfamily. In terms of assembly, forms a complex with GatY.

The protein operates within carbohydrate metabolism; D-tagatose 6-phosphate degradation; D-glyceraldehyde 3-phosphate and glycerone phosphate from D-tagatose 6-phosphate: step 2/2. Functionally, component of the tagatose-1,6-bisphosphate aldolase GatYZ that is required for full activity and stability of the Y subunit. Could have a chaperone-like function for the proper and stable folding of GatY. When expressed alone, GatZ does not show any aldolase activity. Is involved in the catabolism of galactitol. The protein is D-tagatose-1,6-bisphosphate aldolase subunit GatZ of Shigella flexneri serotype 5b (strain 8401).